We begin with the raw amino-acid sequence, 363 residues long: Probable aminomethyltransferase (363 aa).

Belongs to the GcvT family. As to quaternary structure, the glycine cleavage system is composed of four proteins: P, T, L and H.

It catalyses the reaction N(6)-[(R)-S(8)-aminomethyldihydrolipoyl]-L-lysyl-[protein] + (6S)-5,6,7,8-tetrahydrofolate = N(6)-[(R)-dihydrolipoyl]-L-lysyl-[protein] + (6R)-5,10-methylene-5,6,7,8-tetrahydrofolate + NH4(+). Its function is as follows. The glycine cleavage system catalyzes the degradation of glycine. The chain is Probable aminomethyltransferase from Haloarcula marismortui (strain ATCC 43049 / DSM 3752 / JCM 8966 / VKM B-1809) (Halobacterium marismortui).